The chain runs to 303 residues: Mitochondrial carrier homolog 2 (303 aa).

Position 2 is an N-acetylalanine (Ala-2). Topologically, residues 2–15 are mitochondrial intermembrane; it reads ADAASQVLLGSGLT. Solcar repeat units lie at residues 2-98 and 118-206; these read ADAA…YQES and DRVI…INTY. A helical membrane pass occupies residues 16–36; sequence ILSQPLMYVKVLIQVGYEPLP. Over 37-77 the chain is Cytoplasmic; it reads PTIGRNIFGRQVCQLPGLFCYAQHIASIDGRRGLFTGLTPR. Residues 78-92 traverse the membrane as a helical segment; the sequence is LCSGVLGTVVHGKVL. The Mitochondrial intermembrane portion of the chain corresponds to 93 to 135; that stretch reads QYYQESEKPEELGSVTVQKEYSSSFDRVIKETTREMIARSAAT. Residues 136–156 form a helical membrane-spanning segment; the sequence is LITHPFHVITLRSMVQFIGRE. Over 157-180 the chain is Cytoplasmic; it reads SKYCGLCDSIVTIYREEGIVGFFA. Residues 181–199 traverse the membrane as a helical segment; the sequence is GLIPRLLGDIISLWLCNSL. Over 200-231 the chain is Mitochondrial intermembrane; it reads AYLINTYALDSGVSTMNEMKSYSQAVTGFFAS. A helical membrane pass occupies residues 232 to 252; that stretch reads MLTYPFVLVSNLMAVNNCGLA. Residues 253–280 are Cytoplasmic-facing; it reads GGSPPYSPIYTSWIDCWCMLQKAGNMSR. Residues 281 to 303 traverse the membrane as a helical segment; that stretch reads GNSLFFRKVPCGKTYCYDLRMLI.

This sequence belongs to the mitochondrial carrier (TC 2.A.29) family. Interacts with p15BID. In terms of tissue distribution, expressed in a wide variety of tissues. Predominant expressed in liver, kidney, heart, skeletal muscle and testis.

The protein resides in the mitochondrion outer membrane. Functionally, protein insertase that mediates insertion of transmembrane proteins into the mitochondrial outer membrane. Catalyzes insertion of proteins with alpha-helical transmembrane regions, such as signal-anchored, tail-anchored and multi-pass membrane proteins. Does not mediate insertion of beta-barrel transmembrane proteins. Also acts as a receptor for the truncated form of pro-apoptotic BH3-interacting domain death agonist (p15 BID) and has therefore a critical function in apoptosis. Regulates the quiescence/cycling of hematopoietic stem cells (HSCs). Acts as a regulator of mitochondrial fusion, essential for the naive-to-primed interconversion of embryonic stem cells (ESCs). Acts as a regulator of lipid homeostasis and has a regulatory role in adipocyte differentiation and biology. The sequence is that of Mitochondrial carrier homolog 2 from Mus musculus (Mouse).